The following is a 157-amino-acid chain: Transcriptional repressor NrdR (157 aa).

Residues 3–34 fold into a zinc finger; sequence CPFCSATDTKVIDSRLVADGHQVRRRRECLLC. In terms of domain architecture, ATP-cone spans 49–139; sequence PRVVKQDGSR…VYRAFEDVSE (91 aa).

Belongs to the NrdR family. Requires Zn(2+) as cofactor.

In terms of biological role, negatively regulates transcription of bacterial ribonucleotide reductase nrd genes and operons by binding to NrdR-boxes. The protein is Transcriptional repressor NrdR of Shewanella loihica (strain ATCC BAA-1088 / PV-4).